A 436-amino-acid polypeptide reads, in one-letter code: Xylose isomerase (436 aa).

Residues histidine 100 and aspartate 103 contribute to the active site. Positions 231, 267, 270, 295, 306, 308, and 338 each coordinate Mg(2+).

The protein belongs to the xylose isomerase family. Homotetramer. It depends on Mg(2+) as a cofactor.

It is found in the cytoplasm. The catalysed reaction is alpha-D-xylose = alpha-D-xylulofuranose. This Ruegeria sp. (strain TM1040) (Silicibacter sp.) protein is Xylose isomerase.